A 405-amino-acid chain; its full sequence is Cytoplasmic tRNA 2-thiolation protein 2 (405 aa).

The protein belongs to the CTU2/NCS2 family.

It localises to the cytoplasm. It participates in tRNA modification; 5-methoxycarbonylmethyl-2-thiouridine-tRNA biosynthesis. In terms of biological role, plays a central role in 2-thiolation of mcm(5)S(2)U at tRNA wobble positions of tRNA(Lys), tRNA(Glu) and tRNA(Gln). May act by forming a heterodimer with NCS6/CTU1 that ligates sulfur from thiocarboxylated URM1 onto the uridine of tRNAs at wobble position. The protein is Cytoplasmic tRNA 2-thiolation protein 2 of Drosophila melanogaster (Fruit fly).